The sequence spans 75 residues: Sec-independent protein translocase protein TatA (75 aa).

Residues 1 to 21 (MGGISIWQLLIIVAIIVLLFG) traverse the membrane as a helical segment. The interval 50-75 (DAEFKSLNKDESATAGSEKVKDKEQA) is disordered.

The protein belongs to the TatA/E family. In terms of assembly, the Tat system comprises two distinct complexes: a TatABC complex, containing multiple copies of TatA, TatB and TatC subunits, and a separate TatA complex, containing only TatA subunits. Substrates initially bind to the TatABC complex, which probably triggers association of the separate TatA complex to form the active translocon.

The protein resides in the cell inner membrane. In terms of biological role, part of the twin-arginine translocation (Tat) system that transports large folded proteins containing a characteristic twin-arginine motif in their signal peptide across membranes. TatA could form the protein-conducting channel of the Tat system. The protein is Sec-independent protein translocase protein TatA of Mannheimia succiniciproducens (strain KCTC 0769BP / MBEL55E).